Reading from the N-terminus, the 266-residue chain is Transcription regulator FGM4 (266 aa).

The disordered stretch occupies residues 17-36 (KTQNRLAKRKSRIHAGKQQG). Basic residues predominate over residues 18–31 (TQNRLAKRKSRIHA). 2 ANK repeats span residues 183-212 (KPGS…NVNE) and 216-245 (AGYS…DWSY).

It localises to the nucleus. In terms of biological role, transcription regulator; part of the Fg3_54/C64 gene cluster that mediates the biosynthesis of the octapeptide fusaoctaxin A, a virulence factor that is required for cell-to-cell invasiveness of plant host. Positively regulates the expression the Fg3_54/C64 gene cluster. The sequence is that of Transcription regulator FGM4 from Gibberella zeae (strain ATCC MYA-4620 / CBS 123657 / FGSC 9075 / NRRL 31084 / PH-1) (Wheat head blight fungus).